We begin with the raw amino-acid sequence, 103 residues long: Large ribosomal subunit protein bL32m (103 aa).

The transit peptide at 1 to 47 (MALLRGNSLAISQKMLSVFQASALPHISLRIFISPPSIANIWNSILL) directs the protein to the mitochondrion. Zn(2+)-binding residues include C77, C80, C90, and C93.

It belongs to the bacterial ribosomal protein bL32 family. As to quaternary structure, component of the mitochondrial large ribosomal subunit (mt-LSU). Mature yeast 74S mitochondrial ribosomes consist of a small (37S) and a large (54S) subunit. The 37S small subunit contains a 15S ribosomal RNA (15S mt-rRNA) and at least 32 different proteins. The 54S large subunit contains a 21S rRNA (21S mt-rRNA) and at least 45 different proteins. bL32m has a zinc binding site. MRPL32 precursor is processed by the m-AAA protease, which cleaves the N-terminal transit peptide. Cleavage by the m-AAA protease takes place prior to assembly into the large subunit, an essential step for mitochondrial ribosome (mitoribosome) assembly. Proper processing by the m-AAA protease is dependent on the zinc-binding region within the tightly folded C-terminal domain of MRPL32: zinc-dependent folding halts degradation initiated from the N-terminus and triggers the release of mature mrpl32.

It localises to the mitochondrion. Functionally, component of the mitochondrial ribosome (mitoribosome), a dedicated translation machinery responsible for the synthesis of mitochondrial genome-encoded proteins, including at least some of the essential transmembrane subunits of the mitochondrial respiratory chain. The mitoribosomes are attached to the mitochondrial inner membrane and translation products are cotranslationally integrated into the membrane. In Schizosaccharomyces pombe (strain 972 / ATCC 24843) (Fission yeast), this protein is Large ribosomal subunit protein bL32m (mrpl32).